Here is a 786-residue protein sequence, read N- to C-terminus: Endonuclease MutS2 (786 aa).

ATP is bound at residue G335 to T342. Residues L711–K786 form the Smr domain.

This sequence belongs to the DNA mismatch repair MutS family. MutS2 subfamily. Homodimer. Binds to stalled ribosomes, contacting rRNA.

Functionally, endonuclease that is involved in the suppression of homologous recombination and thus may have a key role in the control of bacterial genetic diversity. Its function is as follows. Acts as a ribosome collision sensor, splitting the ribosome into its 2 subunits. Detects stalled/collided 70S ribosomes which it binds and splits by an ATP-hydrolysis driven conformational change. Acts upstream of the ribosome quality control system (RQC), a ribosome-associated complex that mediates the extraction of incompletely synthesized nascent chains from stalled ribosomes and their subsequent degradation. Probably generates substrates for RQC. This chain is Endonuclease MutS2, found in Bacillus anthracis (strain A0248).